Here is a 119-residue protein sequence, read N- to C-terminus: Probable cyclase otaY (119 aa).

It belongs to the aurE cyclase family.

The protein operates within mycotoxin biosynthesis. Its function is as follows. Probable cyclase; part of the gene cluster that mediates the biosynthesis of ochratoxin A (OTA), a mycotoxin composed of a chlorinated type I polyketide dihydroisocoumarin moiety linked to L-phenylalanine, and demonstrated to have nephrotoxic, immunotoxic, genotoxic, neurotoxic, and teratogenic properties. OtaY is probably involved in the polyketide cyclization. The pathway begins with the highly reducing polyketide synthase otaA that catalyzes the formation of the isocoumarin group during the initial stages of biosynthesis, starting from one acetate and 4 malonate units, to originate the characteristic pentaketide skeleton 7-methylmellein (7-MM) of the OTA molecule. The newly identified cyclase otaY might be involved in the polyketide cyclization reaction during the initial steps of the OTA biosynthesis. 7-MM is then oxidized into 7-carboxymellein (also called ochratoxin beta) by the cytochrome P450 monooxygenase otaC. The NRPS encoded by the otaB gene is involved in the linking of phenylalanine to the dihydroisocoumarin ring. The reaction catalyzed by NRPS results in the production of ochratoxin B (OTB), which is the non-chlorinated analog of OTA and which subsequently serves as the substrate of the halogenase otaD for chlorination activity to form the final molecular structure of OTA, containing a chlorine atom in the C-5 position of the molecule. This is Probable cyclase otaY from Aspergillus niger (strain ATCC MYA-4892 / CBS 513.88 / FGSC A1513).